The primary structure comprises 715 residues: Beta-galactosidase 9 (715 aa).

The signal sequence occupies residues 1-20 (MSGGAVAFLLLVAAAAVANA). The Proton donor role is filled by glutamate 178. Glutamate 247 acts as the Nucleophile in catalysis.

The protein belongs to the glycosyl hydrolase 35 family.

The protein resides in the secreted. It localises to the extracellular space. It is found in the apoplast. It catalyses the reaction Hydrolysis of terminal non-reducing beta-D-galactose residues in beta-D-galactosides.. This chain is Beta-galactosidase 9, found in Oryza sativa subsp. japonica (Rice).